The primary structure comprises 594 residues: Protein wntless (594 aa).

Topologically, residues 1-13 are cytoplasmic; sequence MSGTILENLSGRK. The chain crosses the membrane as a helical span at residues 14–34; that stretch reads LSILVATLLLCQVLCFLLGGL. Residues 35–239 lie on the Lumenal side of the membrane; that stretch reads YAPLPAGHVT…AIHQNGGFTQ (205 aa). N58 is a glycosylation site (N-linked (GlcNAc...) asparagine). Residues 240 to 260 traverse the membrane as a helical segment; the sequence is IWLLLKTMLFPFVVGIMIWFW. Residues 261–270 are Cytoplasmic-facing; that stretch reads RRVHLLQRSP. A helical transmembrane segment spans residues 271–291; it reads ALLEYMLIYLGAALTFLNLPL. Topologically, residues 292–311 are lumenal; sequence EYLSLVYEMPYMLLLSDIRQ. The chain crosses the membrane as a helical span at residues 312-332; sequence GIFYAMLLTFWLVFAGEHMLI. The Cytoplasmic portion of the chain corresponds to 333-344; it reads QDAPNKSTIRSR. The chain crosses the membrane as a helical span at residues 345–365; the sequence is YWKHLSAVVVGCISLFVFDIC. Residues 366–390 lie on the Lumenal side of the membrane; the sequence is ERGVQLRNPFYSIWTTPLGAKVAMT. The helical transmembrane segment at 391–411 threads the bilayer; it reads FIVLAGVSAAIYFLFLCYMIW. Over 412–473 the chain is Cytoplasmic; sequence KVFRNIGDKR…ANESKGLIYR (62 aa). A helical membrane pass occupies residues 474–494; the sequence is FKFLMLATLVCAALTVAGFIM. Topologically, residues 495-514 are lumenal; sequence GQMAEGQWDWNDNVAIQPTS. Residues 515–535 form a helical membrane-spanning segment; it reads AFLTGVYGMWNIYIFALLILY. Topologically, residues 536-594 are cytoplasmic; sequence APSHKQWPTMHHSDETTQSNENIVASAASEEIEFSHLPSDSNPSEISSLTSFTRKVAFD. The segment at 571 to 594 is disordered; it reads HLPSDSNPSEISSLTSFTRKVAFD. Polar residues predominate over residues 573-588; sequence PSDSNPSEISSLTSFT.

It belongs to the wntless family. As to quaternary structure, interacts with wg; in the Golgi. Interacts with Vps35, a component of the retromer complex; wls stability is regulated by Vps35. As to expression, ubiquitously expressed in the wing imaginal disk, increased expression is observed in a stripe at the dorso-ventral boundary and other regions of the wing disk that express wg. Also expresses in the leg imaginal disk. During larval development, expression is seen in both motorneurons and muscle.

It is found in the presynaptic cell membrane. The protein localises to the postsynaptic cell membrane. The protein resides in the cell membrane. It localises to the endosome membrane. Its subcellular location is the endoplasmic reticulum membrane. It is found in the golgi apparatus membrane. A segment polarity gene required for wingless (wg)-dependent patterning processes, acting in both wg-sending cells and wg-target cells. In non-neuronal cells wls directs wg secretion. The wls traffic loop encompasses the Golgi, the cell surface, an endocytic compartment and a retrograde route leading back to the Golgi, and involves clathrin-mediated endocytosis and the retromer complex (a conserved protein complex consisting of Vps35 and Vps26). In neuronal cells (the larval motorneuron NMJ), the wg signal moves across the synapse via the release of wls-containing exosome-like vesicles. Postsynaptic wls is required for the trafficking of fz2 through the fz2-interacting protein Grip. In Drosophila melanogaster (Fruit fly), this protein is Protein wntless.